Consider the following 193-residue polypeptide: MFVAPAFAQEADHTAGETHTETGVAEGGHEGGFPPFLVETYPSQLLWLAITFGLFYLFLKRVVLPRIAGILEVRSDRIAQDLDQAARMKEDADAAVAAYEQELAEARKKAAAIAQEARDTAKAEAAAERRKVESGLDSKLKEAEARIALIKDTALSDVGTIAEETAAAIVQELVGGKVDKASLSAAVKAVQQQ.

Residues 9–28 (QEADHTAGETHTETGVAEGG) form a disordered region. The segment covering 10–20 (EADHTAGETHT) has biased composition (basic and acidic residues). Residues 40–59 (TYPSQLLWLAITFGLFYLFL) form a helical membrane-spanning segment.

It belongs to the ATPase B chain family. As to quaternary structure, F-type ATPases have 2 components, F(1) - the catalytic core - and F(0) - the membrane proton channel. F(1) has five subunits: alpha(3), beta(3), gamma(1), delta(1), epsilon(1). F(0) has three main subunits: a(1), b(2) and c(10-14). The alpha and beta chains form an alternating ring which encloses part of the gamma chain. F(1) is attached to F(0) by a central stalk formed by the gamma and epsilon chains, while a peripheral stalk is formed by the delta and b chains.

The protein localises to the cell inner membrane. Functionally, f(1)F(0) ATP synthase produces ATP from ADP in the presence of a proton or sodium gradient. F-type ATPases consist of two structural domains, F(1) containing the extramembraneous catalytic core and F(0) containing the membrane proton channel, linked together by a central stalk and a peripheral stalk. During catalysis, ATP synthesis in the catalytic domain of F(1) is coupled via a rotary mechanism of the central stalk subunits to proton translocation. Its function is as follows. Component of the F(0) channel, it forms part of the peripheral stalk, linking F(1) to F(0). In Chelativorans sp. (strain BNC1), this protein is ATP synthase subunit b 1.